The following is a 377-amino-acid chain: UDP-N-acetylglucosamine--N-acetylmuramyl-(pentapeptide) pyrophosphoryl-undecaprenol N-acetylglucosamine transferase (377 aa).

Residues 11-13, N123, R164, S194, and Q295 each bind UDP-N-acetyl-alpha-D-glucosamine; that span reads TGG.

The protein belongs to the glycosyltransferase 28 family. MurG subfamily.

The protein localises to the cell inner membrane. It catalyses the reaction di-trans,octa-cis-undecaprenyl diphospho-N-acetyl-alpha-D-muramoyl-L-alanyl-D-glutamyl-meso-2,6-diaminopimeloyl-D-alanyl-D-alanine + UDP-N-acetyl-alpha-D-glucosamine = di-trans,octa-cis-undecaprenyl diphospho-[N-acetyl-alpha-D-glucosaminyl-(1-&gt;4)]-N-acetyl-alpha-D-muramoyl-L-alanyl-D-glutamyl-meso-2,6-diaminopimeloyl-D-alanyl-D-alanine + UDP + H(+). Its pathway is cell wall biogenesis; peptidoglycan biosynthesis. Cell wall formation. Catalyzes the transfer of a GlcNAc subunit on undecaprenyl-pyrophosphoryl-MurNAc-pentapeptide (lipid intermediate I) to form undecaprenyl-pyrophosphoryl-MurNAc-(pentapeptide)GlcNAc (lipid intermediate II). This is UDP-N-acetylglucosamine--N-acetylmuramyl-(pentapeptide) pyrophosphoryl-undecaprenol N-acetylglucosamine transferase from Opitutus terrae (strain DSM 11246 / JCM 15787 / PB90-1).